A 950-amino-acid chain; its full sequence is Protocadherin alpha-3 (950 aa).

The N-terminal stretch at 1–29 (MLFSWREDPGAQCLLLSLLLLAASEVGSG) is a signal peptide. 6 consecutive Cadherin domains span residues 30–133 (QLHY…APVF), 134–242 (PMAV…APAF), 243–350 (ERTI…VPEL), 351–455 (VIQS…APAF), 456–565 (SQSE…APAL), and 581–678 (VPRS…APKA). Residues 30-697 (QLHYSVSEEA…GPEAALVDVN (668 aa)) are Extracellular-facing. 2 N-linked (GlcNAc...) asparagine glycosylation sites follow: N257 and N265. N-linked (GlcNAc...) asparagine glycosylation is present at N548. A helical membrane pass occupies residues 698-718 (VYLIVAICAVSSLLVLTLLLY). Over 719–950 (TALRCSAPPT…GNSTTDNSDQ (232 aa)) the chain is Cytoplasmic. PXXP repeat units lie at residues 734-737 (PGKP) and 774-777 (PSLP). A 6 X 4 AA repeats of P-X-X-P region spans residues 734–894 (PGKPTLVCSS…PDKFIIPGSP (161 aa)). 3 disordered regions span residues 777–806 (PPCPISRDREEKQDVDVDLSAKPRQPNPDW), 831–856 (GPGGPDQQWPTVSSATPEPEAGEVSP), and 869–950 (FKYG…NSDQ). Positions 782–797 (SRDREEKQDVDVDLSA) are enriched in basic and acidic residues. PXXP repeat units lie at residues 799 to 802 (PRQP), 832 to 835 (PGGP), 873 to 876 (PGNP), and 891 to 894 (PGSP). Residues 909 to 923 (DKSDFITFGKKEETK) show a composition bias toward basic and acidic residues.

The protein localises to the cell membrane. Its function is as follows. Potential calcium-dependent cell-adhesion protein. May be involved in the establishment and maintenance of specific neuronal connections in the brain. This Homo sapiens (Human) protein is Protocadherin alpha-3 (PCDHA3).